An 852-amino-acid chain; its full sequence is Disrupted in schizophrenia 1 homolog (852 aa).

Disordered regions lie at residues 1–86, 236–264, and 280–320; these read MQGG…GLDP, EAEP…PRHL, and QVTR…QGGG. The interaction with MAP1A stretch occupies residues 1–294; it reads MQGGGPRGAP…SSRQSECGTV (294 aa). Polar residues predominate over residues 65–79; that stretch reads AGLTGQQSQHSQSKA. The segment covering 253 to 263 has biased composition (basic and acidic residues); the sequence is SSDRPHGDPRH. The segment covering 288–311 has biased composition (low complexity); that stretch reads QSECGTVSSSSSDTGFSSQDASSA. Residues 295-693 are interaction with TRAF3IP1; it reads SSSSSDTGFS…LGRVWKADLE (399 aa). Coiled coils occupy residues 367–397 and 449–496; these read EDGD…ALPS and ITRR…LLRW. The segment at 437-594 is required for localization to punctate cytoplasmic foci; sequence LRTTAQDSLP…LLEAKMLALS (158 aa). Positions 443 to 852 are necessary and sufficient for interaction with PCNT and localization at the centrosome; that stretch reads DSLPASITRR…PTAGAQETEA (410 aa). An interaction with ATF4 and ATF5 region spans residues 595–852; it reads GSCFSTAKEL…PTAGAQETEA (258 aa). Disordered regions lie at residues 706–746 and 833–852; these read EAGS…KSPL and KEAG…ETEA. Residues 728–852 are interaction with NDEL1 and PAFAH1B1; that stretch reads TAALAVPRTP…PTAGAQETEA (125 aa). The tract at residues 728–852 is interaction with PAFAH1B1; sequence TAALAVPRTP…PTAGAQETEA (125 aa). The interval 802–835 is interaction with NDEL1; that stretch reads SHDEALFQSLQGELQTVKETLQAMILQLQPTKEA.

In terms of assembly, interacts with NDEL1. Interacts with CCDC88A (via C-terminus); the interaction is direct. Interacts with GSK3B. Interacts with tubulin alpha, ACTN2, ANKHD1, ATF4, ATF5, CEP63, EIF3S3, MAP1A, NDEL1, PAFAH1B1, RANBP9, SPTBN4, SYNE1 and TRAF3IP1. Interaction with microtubules may be mediated in part by TRAF3IP1. Interacts (via C-terminal) with PCNT. Interacts with CHCHD6. Interacts with CCDC141. Interacts with FBXW7, the substrate-recognition component of a SCF (SKP1-CUL1-F-box protein) E3 ubiquitin-protein ligase complex; the interaction targets DISC1 for proteasomal degradation. Interacts with ZNF365. Interacts with ATF4; inhibiting ATF4 transcription factor activity by disrupting ATF4 dimerization and DNA-binding. Interacts with PDE4B. Post-translationally, ubiquitinated. Ubiquitination with 'Lys-48'-linked polyubiquitin chains leads to its proteasomal degradation. As to expression, expressed in granule cell precursors within the dentate migratory stream during the first week of postnatal life and in differentiated granule cells of the hippocampus (at protein level). Detected in heart, brain, kidney, and testis. Expressed in dentate gyrus, hippocampus and in the olfactory bulb.

Its subcellular location is the cytoplasm. It localises to the cytoskeleton. It is found in the mitochondrion. The protein localises to the microtubule organizing center. The protein resides in the centrosome. Its subcellular location is the postsynaptic density. In terms of biological role, involved in the regulation of multiple aspects of embryonic and adult neurogenesis. Required for neural progenitor proliferation in the ventrical/subventrical zone during embryonic brain development and in the adult dentate gyrus of the hippocampus. Participates in the Wnt-mediated neural progenitor proliferation as a positive regulator by modulating GSK3B activity and CTNNB1 abundance. Plays a role as a modulator of the AKT-mTOR signaling pathway controlling the tempo of the process of newborn neurons integration during adult neurogenesis, including neuron positioning, dendritic development and synapse formation. Inhibits the activation of AKT-mTOR signaling upon interaction with CCDC88A. Regulates the migration of early-born granule cell precursors toward the dentate gyrus during the hippocampal development. Inhibits ATF4 transcription factor activity in neurons by disrupting ATF4 dimerization and DNA-binding. Plays a role, together with PCNT, in the microtubule network formation. In Mus musculus (Mouse), this protein is Disrupted in schizophrenia 1 homolog.